A 164-amino-acid polypeptide reads, in one-letter code: R-phycoerythrin alpha chain (164 aa).

(2R,3E)-phycoerythrobilin contacts are provided by N47, K81, C82, R84, H88, R137, C139, and R142.

It belongs to the phycobiliprotein family. In terms of assembly, heterododecamer of 6 alpha and 6 beta chains. The basic functional unit of phycobiliproteins is a ring-shaped hexamer formed from two back-to-back trimers contacting via the alpha chain subunits. The trimers are composed of alpha/beta subunit heterodimers arranged around a three-fold axis of symmetry. The phycoerythrins also contain a gamma subunit which is located in the center of the hexamer. In terms of processing, contains two covalently linked phycoerythrobilin chromophores.

It localises to the plastid. The protein resides in the chloroplast thylakoid membrane. Light-harvesting photosynthetic tetrapyrrole chromophore-protein from the phycobiliprotein complex. This is R-phycoerythrin alpha chain (rpeA) from Agarophyton chilense (Red seaweed).